We begin with the raw amino-acid sequence, 54 residues long: Ovomucoid (54 aa).

Residues 4-54 (VDCSDYPKPVCSLEYMPLCGSDSKTYSNKCDFCNAFVDSNGTLSLSHFGKC) enclose the Kazal-like domain. 3 disulfide bridges follow: Cys-6/Cys-36, Cys-14/Cys-33, and Cys-22/Cys-54. Asn-43 carries an N-linked (GlcNAc...) asparagine glycan.

Its subcellular location is the secreted. In Circus aeruginosus (Western marsh harrier), this protein is Ovomucoid.